The sequence spans 200 residues: MPADPALPDPVPPGPTAPVPTDYPVRLAVDGAEGPWEALVPGVAALVEQAVLAAVAAGDPSGYGLTPGTPLEISLLLTDDAAVQALNRDYRGQDKPTNVLSFAALDAEEPLPEDGEPVLLGDVALARETVVREAADLGIAPADHVFHLVVHGVLHLLGYDHEEEEEALDMEGLETAILGARGIADPYADARGPEQEGSDR.

Over residues 1-18 (MPADPALPDPVPPGPTAP) the composition is skewed to pro residues. The segment at 1 to 22 (MPADPALPDPVPPGPTAPVPTD) is disordered. Residues His151, His155, and His161 each coordinate Zn(2+).

Belongs to the endoribonuclease YbeY family. It depends on Zn(2+) as a cofactor.

The protein resides in the cytoplasm. Single strand-specific metallo-endoribonuclease involved in late-stage 70S ribosome quality control and in maturation of the 3' terminus of the 16S rRNA. This is Endoribonuclease YbeY from Rhodospirillum rubrum (strain ATCC 11170 / ATH 1.1.1 / DSM 467 / LMG 4362 / NCIMB 8255 / S1).